A 71-amino-acid chain; its full sequence is Sec-independent protein translocase protein TatA (71 aa).

A helical membrane pass occupies residues 1–21 (MGSFSLLHWLVVLVIVLLVFG). The interval 43 to 71 (LHEDDKPTDQLGSTSQSTASGPQQDHGKH) is disordered. The span at 52 to 65 (QLGSTSQSTASGPQ) shows a compositional bias: polar residues.

Belongs to the TatA/E family. In terms of assembly, the Tat system comprises two distinct complexes: a TatABC complex, containing multiple copies of TatA, TatB and TatC subunits, and a separate TatA complex, containing only TatA subunits. Substrates initially bind to the TatABC complex, which probably triggers association of the separate TatA complex to form the active translocon.

The protein resides in the cell inner membrane. In terms of biological role, part of the twin-arginine translocation (Tat) system that transports large folded proteins containing a characteristic twin-arginine motif in their signal peptide across membranes. TatA could form the protein-conducting channel of the Tat system. The polypeptide is Sec-independent protein translocase protein TatA (Xylella fastidiosa (strain M12)).